The following is a 566-amino-acid chain: MTTHNSQYSAETTHPDKQESSPAPTAAGTTASNVSTTGNATTPDASIALNADATPVADVPPRLFGSFVEHLGRCVYGGIYEPSHPTADENGFRQDVLDLVKELGVTCVRYPGGNFVSNYNWEDGIGPRENRPMRRDLAWHCTETNEMGIDDFYRWSQKAGTEIMLAVNMGTRGLKAALDELEYVNGAPGTAWADQRVANGIEEPMDIKMWCIGNEMDGPWQVGHMSPEEYAGAVDKVAHAMKLAESGLELVACGSSGAYMPTFGTWEKTVLTKAYENLDFVSCHAYYFDRGHKTRAAASMQDFLASSEDMTKFIATVSDAADQAREANNGTKDIALSFDEWGVWYSDKWNEQEDQWKAEAAQGLHHEPWPKSPHLLEDIYTAADAVVEGSLMITLLKHCDRVRSASRAQLVNVIAPIMAEEHGPAWRQTTFYPFAEAALHARGQAYAPAISSPTIHTEAYGDVPAIDAVVTWDEQARTGLLLAVNRDANTPHTLTIDLSGLPGLPGLGTLALGKAQLLHEDDPYRTNTAEAPEAVTPQPLDIAMNATGTCTATLPAISWISVEFHG.

Positions 1 to 12 (MTTHNSQYSAET) are enriched in polar residues. Residues 1–39 (MTTHNSQYSAETTHPDKQESSPAPTAAGTTASNVSTTGN) form a disordered region. The segment covering 20–32 (SSPAPTAAGTTAS) has biased composition (low complexity). Residues Glu69, Asn114, and Asn214 each contribute to the alpha-L-arabinofuranose site. Glu215 functions as the Proton donor/acceptor in the catalytic mechanism. Residues Tyr286, Glu340, and Gln409 each contribute to the alpha-L-arabinofuranose site. Residue Glu340 is the Nucleophile of the active site.

Belongs to the glycosyl hydrolase 51 family. As to quaternary structure, homohexamer; trimer of dimers.

The protein localises to the cytoplasm. It carries out the reaction Hydrolysis of terminal non-reducing alpha-L-arabinofuranoside residues in alpha-L-arabinosides.. The protein operates within glycan metabolism; L-arabinan degradation. Its activity is regulated as follows. Completely inhibited by Hg(2+) and Cu(2+) ions, whereas 1 mM Zn(2+) inhibited activity by 51%. In terms of biological role, involved in the degradation of arabinan and is a key enzyme in the complete degradation of the plant cell wall. Catalyzes the cleavage of terminal alpha-(1-&gt;5)-arabinofuranosyl bonds in different hemicellulosic homopolysaccharides (branched and debranched arabinans). It is active with sugar beet arabinan and wheat arabinoxylan. It also exhibited activity against alpha-(1-&gt;5)-linked arabinobiose, arabinotriose, arabinotetraose, and arabinopentaose. The sequence is that of Intracellular exo-alpha-(1-&gt;5)-L-arabinofuranosidase (abfB) from Bifidobacterium longum.